We begin with the raw amino-acid sequence, 213 residues long: Orotate phosphoribosyltransferase (213 aa).

Lysine 26 contacts 5-phospho-alpha-D-ribose 1-diphosphate. Phenylalanine 34 to phenylalanine 35 serves as a coordination point for orotate. 5-phospho-alpha-D-ribose 1-diphosphate is bound by residues tyrosine 72–lysine 73, arginine 99, lysine 100, lysine 103, histidine 105, and aspartate 124–alanine 132. Residues threonine 128 and arginine 156 each coordinate orotate.

Belongs to the purine/pyrimidine phosphoribosyltransferase family. PyrE subfamily. In terms of assembly, homodimer. Mg(2+) is required as a cofactor.

It catalyses the reaction orotidine 5'-phosphate + diphosphate = orotate + 5-phospho-alpha-D-ribose 1-diphosphate. It functions in the pathway pyrimidine metabolism; UMP biosynthesis via de novo pathway; UMP from orotate: step 1/2. Catalyzes the transfer of a ribosyl phosphate group from 5-phosphoribose 1-diphosphate to orotate, leading to the formation of orotidine monophosphate (OMP). The protein is Orotate phosphoribosyltransferase of Salmonella paratyphi A (strain ATCC 9150 / SARB42).